A 430-amino-acid chain; its full sequence is Lipoyl synthase, mitochondrial (430 aa).

The N-terminal 37 residues, 1–37 (MATSAGKLRTLYSAHSSLSSLPPSARPTLQLATLRSY), are a transit peptide targeting the mitochondrion. Over residues 39–55 (TTTPHDSPIGNTSNTPP) the composition is skewed to polar residues. Residues 39–59 (TTTPHDSPIGNTSNTPPTVKR) are disordered. Positions 141, 146, 152, 172, 176, 179, and 387 each coordinate [4Fe-4S] cluster. One can recognise a Radical SAM core domain in the interval 155–376 (GSSKSAATAT…KERALEMGFL (222 aa)).

Belongs to the radical SAM superfamily. Lipoyl synthase family. [4Fe-4S] cluster serves as cofactor.

Its subcellular location is the mitochondrion. The catalysed reaction is [[Fe-S] cluster scaffold protein carrying a second [4Fe-4S](2+) cluster] + N(6)-octanoyl-L-lysyl-[protein] + 2 oxidized [2Fe-2S]-[ferredoxin] + 2 S-adenosyl-L-methionine + 4 H(+) = [[Fe-S] cluster scaffold protein] + N(6)-[(R)-dihydrolipoyl]-L-lysyl-[protein] + 4 Fe(3+) + 2 hydrogen sulfide + 2 5'-deoxyadenosine + 2 L-methionine + 2 reduced [2Fe-2S]-[ferredoxin]. Its pathway is protein modification; protein lipoylation via endogenous pathway; protein N(6)-(lipoyl)lysine from octanoyl-[acyl-carrier-protein]: step 2/2. Its function is as follows. Catalyzes the radical-mediated insertion of two sulfur atoms into the C-6 and C-8 positions of the octanoyl moiety bound to the lipoyl domains of lipoate-dependent enzymes, thereby converting the octanoylated domains into lipoylated derivatives. This chain is Lipoyl synthase, mitochondrial, found in Ajellomyces capsulatus (strain H143) (Darling's disease fungus).